A 1762-amino-acid polypeptide reads, in one-letter code: Kinase D-interacting substrate of 220 kDa (1762 aa).

The Cytoplasmic portion of the chain corresponds to 1–508 (MSVLISQSVI…WLIVFLTLLL (508 aa)). ANK repeat units follow at residues 45–74 (AAEQ…NWTA), 78–107 (ASKE…GWTA), 111–140 (ACYK…SVYP), 145–174 (AGRG…TTPL), 178–207 (ARKG…MTAL), 211–240 (VKGG…NTAL), 244–273 (SKEG…DTVL), 277–306 (VRGG…KTAL), 310–339 (VEKG…ETPL), 343–372 (TKMR…DTPL), and 376–405 (IRGR…KAGE). Positions 440–953 (YDLYSSALAD…NIVSVTGRLL (514 aa)) constitute a KAP NTPase domain. The helical transmembrane segment at 509 to 529 (CGGLGLVFAFTVDTNLAIAIS) threads the bilayer. Topologically, residues 530–533 (LSFL) are extracellular. Residues 534 to 554 (ALIYIFFIVIYFGGRREGESW) traverse the membrane as a helical segment. Residues 555 to 668 (NWAWALSTRL…SFVIFLFIVG (114 aa)) lie on the Cytoplasmic side of the membrane. A helical membrane pass occupies residues 669-689 (CIIAGITLLAIFRVDPKHLTV). Residues 690–696 (NAILISI) lie on the Extracellular side of the membrane. The chain crosses the membrane as a helical span at residues 697-717 (ASVVGLAFVLNCRTWWQVLDS). Residues 718–1680 (LLNSQRKRLH…TPSTVTLNNN (963 aa)) are Cytoplasmic-facing. Residues Ser882 and Ser885 each carry the phosphoserine modification. A Phosphothreonine modification is found at Thr914. Ser918 carries the post-translational modification Phosphoserine; by PKD. A mediates interaction with CRKL region spans residues 1089–1092 (PRPP). Residues Ser1163, Ser1288, Ser1344, Ser1351, Ser1353, Ser1354, and Ser1357 each carry the phosphoserine modification. Disordered stretches follow at residues 1279–1305 (DPRF…HTEL), 1336–1358 (RHSN…LNSQ), 1390–1440 (EGGT…DGRK), and 1452–1556 (YSSS…EPIR). A compositionally biased stretch (polar residues) spans 1338–1350 (SNLSWQSQTRRTP). Residues 1395–1422 (SSTISGRSSPHSTYYIGQSSSGGSIHST) are compositionally biased toward low complexity. The segment covering 1423–1440 (LEQERGKEGELKQEDGRK) has biased composition (basic and acidic residues). Polar residues predominate over residues 1452 to 1462 (YSSSGVSTNEA). Phosphoserine is present on residues Ser1513, Ser1518, Ser1547, and Ser1566. Residues 1514–1524 (DEDESGTEESD) show a composition bias toward acidic residues. The segment covering 1529 to 1553 (LKDDKDKKAEGKAERVCKSPEHSAE) has biased composition (basic and acidic residues). The tract at residues 1571–1628 (DKKDSSDSGVRSNESSPNHSLHNEAADDSQLEKANLIELEDEGHSGKRGMPHSLSGLQ) is disordered. Residues 1579–1590 (GVRSNESSPNHS) are compositionally biased toward polar residues. Phosphoserine is present on residues Ser1615 and Ser1625. Residue Thr1671 is modified to Phosphothreonine. Ser1673 is subject to Phosphoserine. Thr1676 carries the post-translational modification Phosphothreonine. The interval 1704–1762 (ILRPGPSPNPTAVQNENLKSMAHKRSQRSSYTRLSKDASELHAASSESTGFGEERESIL) is disordered. The short motif at 1757 to 1762 (ERESIL) is the PDZ-binding element.

In terms of assembly, found in a complex, at least composed of KIDINS220, MAGI2, NTRK1 and RAPGEF2; the complex is mainly formed at late endosomes in a nerve growth factor (NGF)-dependent manner. Interacts with RAPGEF2; the interaction is strengthened after NGF stimulation. Isoform 2 interacts (via C-terminal domain) with MAGI2 isoform 1 (via PDZ domain). Interacts with NTRK1, NTRK2, NTRK3, ERKL and NGFR. Can form a ternary complex with NGFR and NTRK1 and this complex is affected by the expression levels of KIDINS220/ARMS. An increase in KIDINS220/ARMS expression leads to a decreased association of NGFR and NTRK1. Interacts (via PDZ-binding motif) with SNTA1 and SNTB2 (via PDZ domains). Interacts with EPHA4 and PRKD1. Tyrosine phosphorylated by NTRK1, NTRK2, EPHB2 and EPHA4. Phosphorylation at Ser-918 is induced by phorbol ester treatment. Phosphorylation by NTRK2 is induced by brain-derived neurotrophic factor (BDNF) and neurotrophin-4/5. Phosphorylation by NTRK1 is induced by nerve growth factor (NGF). In terms of tissue distribution, expressed in developing nervous system and in highly plastic areas of the adult brain. Also expressed in neuroendocrine cells, where it concentrates at the tip of neurites. Expressed in developing muscle and is concentrated at the neuromuscular junction (NMS). SNTA1 can regulate its localization in the NMS.

It localises to the membrane. The protein resides in the late endosome. Its function is as follows. Promotes a prolonged MAP-kinase signaling by neurotrophins through activation of a Rap1-dependent mechanism. Provides a docking site for the CRKL-C3G complex, resulting in Rap1-dependent sustained ERK activation. May play an important role in regulating postsynaptic signal transduction through the syntrophin-mediated localization of receptor tyrosine kinases such as EPHA4. In cooperation with SNTA1 can enhance EPHA4-induced JAK/STAT activation. Plays a role in nerve growth factor (NGF)-induced recruitment of RAPGEF2 to late endosomes and neurite outgrowth. May play a role in neurotrophin- and ephrin-mediated neuronal outgrowth and in axon guidance during neural development and in neuronal regeneration. This Rattus norvegicus (Rat) protein is Kinase D-interacting substrate of 220 kDa (Kidins220).